An 85-amino-acid polypeptide reads, in one-letter code: Large ribosomal subunit protein bL31B (85 aa).

The protein belongs to the bacterial ribosomal protein bL31 family. Type B subfamily. As to quaternary structure, part of the 50S ribosomal subunit.

The polypeptide is Large ribosomal subunit protein bL31B (Macrococcus caseolyticus (strain JCSC5402) (Macrococcoides caseolyticum)).